A 546-amino-acid polypeptide reads, in one-letter code: Chaperonin GroEL (546 aa).

ATP contacts are provided by residues 30–33, Lys-51, 87–91, Gly-415, 479–481, and Asp-495; these read TLGP, DGTTT, and NAA.

Belongs to the chaperonin (HSP60) family. As to quaternary structure, forms a cylinder of 14 subunits composed of two heptameric rings stacked back-to-back. Interacts with the co-chaperonin GroES.

The protein localises to the cytoplasm. The catalysed reaction is ATP + H2O + a folded polypeptide = ADP + phosphate + an unfolded polypeptide.. In terms of biological role, together with its co-chaperonin GroES, plays an essential role in assisting protein folding. The GroEL-GroES system forms a nano-cage that allows encapsulation of the non-native substrate proteins and provides a physical environment optimized to promote and accelerate protein folding. The polypeptide is Chaperonin GroEL (Pseudomonas entomophila (strain L48)).